A 352-amino-acid chain; its full sequence is Phenylalanine--tRNA ligase alpha subunit (352 aa).

Residue Glu258 participates in Mg(2+) binding.

It belongs to the class-II aminoacyl-tRNA synthetase family. Phe-tRNA synthetase alpha subunit type 1 subfamily. In terms of assembly, tetramer of two alpha and two beta subunits. It depends on Mg(2+) as a cofactor.

It is found in the cytoplasm. It catalyses the reaction tRNA(Phe) + L-phenylalanine + ATP = L-phenylalanyl-tRNA(Phe) + AMP + diphosphate + H(+). In Staphylococcus carnosus (strain TM300), this protein is Phenylalanine--tRNA ligase alpha subunit.